A 125-amino-acid chain; its full sequence is Small ribosomal subunit protein eS26 (125 aa).

Belongs to the eukaryotic ribosomal protein eS26 family.

The protein is Small ribosomal subunit protein eS26 (RPS26) of Sterkiella nova (Ciliate).